A 1048-amino-acid chain; its full sequence is MDITELLQCFACTLDHNAAVRTNAETHLKNASKVPGFLGACLDIIAADEVPENIKLSASLYFKNKITYGWSAGARQGSNELLDSHVDPDEKPVVKDMLIKTMVSVSKTSPRCIRVLKSALTVIISEDYPSKKWGNLLPNSLELLANEDITVTYVGLLCLAEIFRTYRWKNNDERQDLEELILNYFPALLNYGANVLFQDGKYMNNEQIGELVKLIIKIYKFVSYHDLPFTLQRSESFTPWACFFVSIIQQPLPQEVLAISDIEVRSKNPWVKCKKWALANLYRLFQRYASTSLTRKFQYDEFKQMYCEEFLTQFLQVVFDQIEKWGTGQLWLSDECLYYILNFVEQCVVQKTTWKLVGPHYNVILQHVIFPLLKPTAETLEAFDNDPQEYINRNMDFWDVGYSPDLAALALLTTCVTKRGKTTLQPTLEFMVSTLQSAVGDYNNIMLDNALQIESCLRIFSSIIDRLITKDSPFASEMEKFILTYVLPFFKSQYGFLQSRVCDICSKLGSMDFKDPVITSTIYEGVMNCLNNSSNSLPVELTAALALQTFISDDQFNMKLSEHVVPTMQKLLSLSNDFESDVISGVMQDFVEQFAEQLQPFGVELMNTLVQQFLKLAIDLHETSNLDPDSFTNVDSIPDESDKQMAALGILSTTISILLSFENSPEILKNLEQSFYPAAEFILKNDIEDFYRECCEFVENSTFLLRDITPISWKILELIGECNRKPDSMVSYYLSDFMLALNNILIYGRNELKKNEFYTKIIFEIYQKAVTAEDNSLDDLRVVFDLSQELVLALDDSLPQQYRERLLADVVGSILTQKNELKTNVVFSVTAFNVVISNMITEPLITLQYLKQQGCLEIFFQTWITDYIPNYKRCYDIKLSVLALLKIILKLESNDYSVLNLENLVPQLGSIVTQLASRLPTALRQLANQRKEFSSSGFEEDTKWDENFLDVGDDDENDDEGDLTEKYLELIKNRADSLDFVDGYDAKETFDDLEEDPLTGSILDTVDVYKVFKESIANLQHVDSNRYQGILRHLTPADQELFMGIMNA.

Positions 24–104 constitute an Importin N-terminal domain; sequence AETHLKNASK…KDMLIKTMVS (81 aa). Serine 977 carries the phosphoserine modification.

In terms of assembly, GTP-bound Ran dissociates the isolated NMD5/TFIIS complex.

It is found in the nucleus. The protein resides in the cytoplasm. Its function is as follows. Active in protein import into the nucleus. Its major import substrate is transcription elongation factor TFIIS. This is Nonsense-mediated mRNA decay protein 5 (NMD5) from Saccharomyces cerevisiae (strain ATCC 204508 / S288c) (Baker's yeast).